The chain runs to 163 residues: Ribosome maturation factor RimP (163 aa).

Belongs to the RimP family.

It is found in the cytoplasm. Required for maturation of 30S ribosomal subunits. The chain is Ribosome maturation factor RimP from Polynucleobacter necessarius subsp. necessarius (strain STIR1).